The primary structure comprises 60 residues: Large ribosomal subunit protein bL32 (60 aa).

Residues 1–16 are compositionally biased toward basic residues; it reads MAVPKRKTSPSKRGMR. Residues 1 to 60 form a disordered region; the sequence is MAVPKRKTSPSKRGMRRSADALKAPTYVEDKNSGEMRRPHHIDLKTGMYRGRQVLTPKES. The span at 28 to 44 shows a compositional bias: basic and acidic residues; sequence VEDKNSGEMRRPHHIDL.

This sequence belongs to the bacterial ribosomal protein bL32 family.

The chain is Large ribosomal subunit protein bL32 from Mesorhizobium japonicum (strain LMG 29417 / CECT 9101 / MAFF 303099) (Mesorhizobium loti (strain MAFF 303099)).